Here is a 148-residue protein sequence, read N- to C-terminus: Large ribosomal subunit protein bL9 (148 aa).

The protein belongs to the bacterial ribosomal protein bL9 family.

Binds to the 23S rRNA. This chain is Large ribosomal subunit protein bL9, found in Parabacteroides distasonis (strain ATCC 8503 / DSM 20701 / CIP 104284 / JCM 5825 / NCTC 11152).